Reading from the N-terminus, the 191-residue chain is General negative regulator of transcription subunit 2 (191 aa).

Belongs to the CNOT2/3/5 family. As to quaternary structure, forms a NOT protein complex that comprises NOT1, NOT2, NOT3, NOT4 and NOT5. Subunit of the 1.0 MDa CCR4-NOT core complex that contains CCR4, CAF1, NOT1, NOT2, NOT3, NOT4, NOT5, CAF40 and CAF130. In the complex interacts with NOT1 and NOT5. The core complex probably is part of a less characterized 1.9 MDa CCR4-NOT complex.

The protein resides in the cytoplasm. It is found in the nucleus. Acts as a component of the CCR4-NOT core complex, which in the nucleus seems to be a general transcription factor, and in the cytoplasm the major mRNA deadenylase involved in mRNA turnover. NOT2 is required for the integrity of the complex. The NOT protein subcomplex negatively regulates the basal and activated transcription of many genes. Preferentially affects TC-type TATA element-dependent transcription. Could directly or indirectly inhibit component(s) of the general transcription machinery. The protein is General negative regulator of transcription subunit 2 (CDC36) of Saccharomyces cerevisiae (strain ATCC 204508 / S288c) (Baker's yeast).